We begin with the raw amino-acid sequence, 274 residues long: MGTLSVNQNKLQKRLRRLAGEAITDYNMIEDGDKVMVCLSGGKDSYTMLDVLLHLQKVAPITFEIVAVNMDQKQPGFPEHVLPAYLKELGVEYHIVEKDTYSVVKELVPEGKTTCSLCSRLRRGTLYTFADEIGATKMALGHHRDDIVETFFLNMFFNGALKGMPPKLRADDGRNVVIRPLAYCSEKDIQAYSDMKAFPIIPCNLCGSQENLQRQVVKDMLVEWERKHPGRTESIFRALQNVAPSQLADRNLFDFTSLKIDENATPRFLDVLNI.

A PP-loop motif motif is present at residues 40-45 (SGGKDS). [4Fe-4S] cluster is bound by residues Cys115, Cys118, and Cys206.

This sequence belongs to the TtcA family. Homodimer. Mg(2+) serves as cofactor. Requires [4Fe-4S] cluster as cofactor.

Its subcellular location is the cytoplasm. The catalysed reaction is cytidine(32) in tRNA + S-sulfanyl-L-cysteinyl-[cysteine desulfurase] + AH2 + ATP = 2-thiocytidine(32) in tRNA + L-cysteinyl-[cysteine desulfurase] + A + AMP + diphosphate + H(+). It participates in tRNA modification. In terms of biological role, catalyzes the ATP-dependent 2-thiolation of cytidine in position 32 of tRNA, to form 2-thiocytidine (s(2)C32). The sulfur atoms are provided by the cysteine/cysteine desulfurase (IscS) system. This is tRNA-cytidine(32) 2-sulfurtransferase from Pseudomonas putida (strain ATCC 700007 / DSM 6899 / JCM 31910 / BCRC 17059 / LMG 24140 / F1).